Reading from the N-terminus, the 1038-residue chain is Protein argonaute 1D (1038 aa).

2 disordered regions span residues 1–58 and 110–134; these read MGSR…GAAP and APHE…PRSL. 2 stretches are compositionally biased toward gly residues: residues 18–29 and 43–52; these read RGGGRGGGGRGR and GHGGRGGAGY. The span at 115-134 shows a compositional bias: low complexity; the sequence is PANVSSPEAASPEASSPRSL. In terms of domain architecture, PAZ spans 380–493; that stretch reads PVIDFVIQLL…LPMEVCKIVE (114 aa). In terms of domain architecture, Piwi spans 669 to 990; the sequence is LLIGLLPDNN…AAFRARFYME (322 aa). The interval 992–1021 is disordered; sequence DSSDSGSMASGRGGGSSTSRSTRAAGGGAV.

The protein belongs to the argonaute family. Ago subfamily.

In terms of biological role, probably involved in the RNA silencing pathway. May bind to short RNAs such as microRNAs (miRNAs) or short interfering RNAs (siRNAs), and represses the translation of mRNAs which are complementary to them. The sequence is that of Protein argonaute 1D (AGO1D) from Oryza sativa subsp. japonica (Rice).